A 20-amino-acid chain; its full sequence is Unknown protein NF009 from 2D-PAGE (20 aa).

The segment at 1–20 (ATSAAQGAALDESVRKVLKP) is disordered.

The protein is Unknown protein NF009 from 2D-PAGE of Naegleria fowleri (Brain eating amoeba).